We begin with the raw amino-acid sequence, 504 residues long: Arabinose import ATP-binding protein AraG (504 aa).

2 consecutive ABC transporter domains span residues 8–243 and 256–499; these read LSFR…MVGR and YGEE…MPKV. ATP is bound at residue 40 to 47; the sequence is GENGAGKS.

The protein belongs to the ABC transporter superfamily. Arabinose importer (TC 3.A.1.2.2) family. The complex is composed of two ATP-binding proteins (AraG), two transmembrane proteins (AraH) and a solute-binding protein (AraF).

It is found in the cell inner membrane. The enzyme catalyses L-arabinose(out) + ATP + H2O = L-arabinose(in) + ADP + phosphate + H(+). Its function is as follows. Part of the ABC transporter complex AraFGH involved in arabinose import. Responsible for energy coupling to the transport system. This Shigella dysenteriae serotype 1 (strain Sd197) protein is Arabinose import ATP-binding protein AraG.